A 61-amino-acid polypeptide reads, in one-letter code: Small ribosomal subunit protein uS14 (61 aa).

The Zn(2+) site is built by cysteine 24, cysteine 27, cysteine 40, and cysteine 43.

Belongs to the universal ribosomal protein uS14 family. Zinc-binding uS14 subfamily. As to quaternary structure, part of the 30S ribosomal subunit. Contacts proteins S3 and S10. Zn(2+) serves as cofactor.

Binds 16S rRNA, required for the assembly of 30S particles and may also be responsible for determining the conformation of the 16S rRNA at the A site. The polypeptide is Small ribosomal subunit protein uS14 (Desulfotalea psychrophila (strain LSv54 / DSM 12343)).